The chain runs to 59 residues: UPF0434 protein VS_2060 (59 aa).

Belongs to the UPF0434 family.

This is UPF0434 protein VS_2060 from Vibrio atlanticus (strain LGP32) (Vibrio splendidus (strain Mel32)).